Here is a 286-residue protein sequence, read N- to C-terminus: Acetyl-coenzyme A carboxylase carboxyl transferase subunit beta (286 aa).

The CoA carboxyltransferase N-terminal domain maps to 26–286 (LWEKCVKCDA…LAKFTRRAAV (261 aa)). Zn(2+) is bound by residues Cys-30, Cys-33, Cys-49, and Cys-52. Residues 30–52 (CVKCDAVLYKPELEKNLDVCPKC) form a C4-type zinc finger.

The protein belongs to the AccD/PCCB family. Acetyl-CoA carboxylase is a heterohexamer composed of biotin carboxyl carrier protein (AccB), biotin carboxylase (AccC) and two subunits each of ACCase subunit alpha (AccA) and ACCase subunit beta (AccD). It depends on Zn(2+) as a cofactor.

It localises to the cytoplasm. The enzyme catalyses N(6)-carboxybiotinyl-L-lysyl-[protein] + acetyl-CoA = N(6)-biotinyl-L-lysyl-[protein] + malonyl-CoA. It functions in the pathway lipid metabolism; malonyl-CoA biosynthesis; malonyl-CoA from acetyl-CoA: step 1/1. Functionally, component of the acetyl coenzyme A carboxylase (ACC) complex. Biotin carboxylase (BC) catalyzes the carboxylation of biotin on its carrier protein (BCCP) and then the CO(2) group is transferred by the transcarboxylase to acetyl-CoA to form malonyl-CoA. This is Acetyl-coenzyme A carboxylase carboxyl transferase subunit beta from Cellvibrio japonicus (strain Ueda107) (Pseudomonas fluorescens subsp. cellulosa).